The sequence spans 1260 residues: Paraclostridial mosquitocidal protein 1 (1260 aa).

Residue H208 participates in Zn(2+) binding. E209 acts as the Proton acceptor in catalysis. Residues H212 and E248 each coordinate Zn(2+). The cysteines at positions 395 and 406 are disulfide-linked. The translocation domain (TD) stretch occupies residues 401-824 (NRVNICIDVN…NIQSIPDFDI (424 aa)). Residues 825-1065 (NALIDRLGIQ…SYFNSNILRD (241 aa)) form an HCN region. The tract at residues 1066-1260 (FWGEPLEYNK…FVSEDEGWKE (195 aa)) is HCC.

This sequence belongs to the peptidase M27 family. It depends on Zn(2+) as a cofactor.

It catalyses the reaction Limited hydrolysis of proteins of the neuroexocytosis apparatus, synaptobrevins, SNAP25 or syntaxin. No detected action on small molecule substrates.. Preincubation with the metalloprotease inhibitor 1,10-phenanthroline before injection into Anopheles or Aedes decreases toxicity. In terms of biological role, neurotoxin active against Anopheles but not Aedes mosquitoes upon oral ingestion; expression of the ptox operon (ntnh-orfX1-orfX2-orfX3-pmp1) in B.thuringiensis kills Anopheles but not Aedes mosquito 3rd instar larvae. The ntnh-pmp1 construct is about half as toxic. PMP1 is toxic when injected directly into Anopheles or Aedes mosquito 3rd instar larvae, larvae no longer move, suggesting they are paralyzed. Adult mosquitoes (Anopheles or Aedes) and Drosophila lose the ability to fly in a dose-dependent manner by 24 hours after injection with 100 pg neurotoxin. Not toxic upon injection in mice. Its function is as follows. Neurotoxin that cleaves A.gambiae syntaxin 1a, probably hydrolyzing the '240-Glu-|-His-241' bond. Does not cleave A.gambiae n-synaptobrevin or SNAP-25, nor human syntaxin 1A. Responsible for host epithelial cell transcytosis, host nerve cell targeting and translocation of PMP1 light chain (LC) into host cytosol. Composed of 3 subdomains; the translocation domain (TD), and N-terminus and C-terminus of the receptor-binding domain (RBD), called HCN and HCC. In Paraclostridium bifermentans (Clostridium bifermentans), this protein is Paraclostridial mosquitocidal protein 1.